The following is a 354-amino-acid chain: CX3C chemokine receptor 1 (354 aa).

The Extracellular portion of the chain corresponds to 1–32; that stretch reads MPTSFPELDLENFEYDDSAEACYLGDIVAFGT. Residues 33–60 form a helical membrane-spanning segment; the sequence is IFLSIFYSLVFTFGLVGNLLVVLALTNS. At 61-70 the chain is on the cytoplasmic side; it reads RKSKSITDIY. A helical membrane pass occupies residues 71-91; it reads LLNLALSDLLFVATLPFWTHY. Residues 92–104 are Extracellular-facing; sequence LISHEGLHNAMCK. A disulfide bridge connects residues C103 and C176. A helical transmembrane segment spans residues 105 to 126; it reads LTTAFFFIGFFGGIFFITVISI. Over 127-143 the chain is Cytoplasmic; that stretch reads DRYLAIVLAANSMNNRT. Residues 144-168 form a helical membrane-spanning segment; it reads VQHGVTISLGVWAAAILVASPQFMF. Residues 169 to 196 lie on the Extracellular side of the membrane; it reads TKRKDNECLGDYPEVLQEIWPVLRNSEV. A helical transmembrane segment spans residues 197–216; the sequence is NILGFVLPLLIMSFCYFRIV. Topologically, residues 217–232 are cytoplasmic; sequence RTLFSCKNRKKARAIR. A helical transmembrane segment spans residues 233–257; sequence LILLVVVVFFLFWTPYNIVIFLETL. The Extracellular portion of the chain corresponds to 258–274; that stretch reads KFYNFFPSCGMKRDLRW. The helical transmembrane segment at 275–298 threads the bilayer; it reads ALSVTETVAFSHCCLNPFIYAFAG. Over 299-354 the chain is Cytoplasmic; sequence EKFRRYLRHLYNKCLAVLCGRPVHAGFSTESQRSRQDSILSSLTHYTSEGEGSLLL. T345 is subject to Phosphothreonine.

It belongs to the G-protein coupled receptor 1 family. Found in a ternary complex with CX3CL1 and ITGAV:ITGB3 or ITGA4:ITGB1. This protein is not N-glycosylated which is unusual for G-protein-coupled receptors. As to expression, most abundant in adult spinal cord, brain, kidney, gut, uterus and testes.

It is found in the cell membrane. In terms of biological role, receptor for the C-X3-C chemokine fractalkine (CX3CL1) present on many early leukocyte cells; CX3CR1-CX3CL1 signaling exerts distinct functions in different tissue compartments, such as immune response, inflammation, cell adhesion and chemotaxis. CX3CR1-CX3CL1 signaling mediates cell migratory functions. Responsible for the recruitment of natural killer (NK) cells to inflamed tissues. Acts as a regulator of inflammation process leading to atherogenesis by mediating macrophage and monocyte recruitment to inflamed atherosclerotic plaques, promoting cell survival. Involved in airway inflammation by promoting interleukin 2-producing T helper (Th2) cell survival in inflamed lung. Involved in the migration of circulating monocytes to non-inflamed tissues, where they differentiate into macrophages and dendritic cells. Acts as a negative regulator of angiogenesis, probably by promoting macrophage chemotaxis. Plays a key role in brain microglia by regulating inflammatory response in the central nervous system (CNS) and regulating synapse maturation. Required to restrain the microglial inflammatory response in the CNS and the resulting parenchymal damage in response to pathological stimuli. Involved in brain development by participating in synaptic pruning, a natural process during which brain microglia eliminates extra synapses during postnatal development. Synaptic pruning by microglia is required to promote the maturation of circuit connectivity during brain development. Acts as an important regulator of the gut microbiota by controlling immunity to intestinal bacteria and fungi. Expressed in lamina propria dendritic cells in the small intestine, which form transepithelial dendrites capable of taking up bacteria in order to provide defense against pathogenic bacteria. Required to initiate innate and adaptive immune responses against dissemination of commensal fungi (mycobiota) component of the gut: expressed in mononuclear phagocytes (MNPs) and acts by promoting induction of antifungal IgG antibodies response to confer protection against disseminated C.albicans or C.auris infection. Also acts as a receptor for C-C motif chemokine CCL26, inducing cell chemotaxis. This chain is CX3C chemokine receptor 1, found in Rattus norvegicus (Rat).